The chain runs to 505 residues: Bifunctional NAD(P)H-hydrate repair enzyme Nnr (505 aa).

An NAD(P)H-hydrate epimerase region spans residues 1–219 (MKPTFPAIVT…SVVIETALAS (219 aa)). Residues 14-214 (MQAIEGAMFN…PFDIPSVVIE (201 aa)) form the YjeF N-terminal domain. The segment at 63-67 (HNGGD) is NADPHX 1; for epimerase activity. N64 and D124 together coordinate K(+). Residues 128–134 (GFGLERE) form an NADPHX 1; for epimerase activity region. D157 is a binding site for (6S)-NADPHX. K(+) is bound at residue S160. The region spanning 226 to 500 (LDDSCWQALP…AHLLPTLRRA (275 aa)) is the YjeF C-terminal domain. The segment at 227–505 (DDSCWQALPL…TLRRALAARV (279 aa)) is ADP-dependent (S)-NAD(P)H-hydrate dehydratase. Residue G330 coordinates (6S)-NADPHX. The NADPHX 2; for dehydratase activity stretch occupies residues 376–382 (HYGEFRR). ADP-binding positions include 412–416 (KGART) and 432–441 (TPALARGGSG). D442 serves as a coordination point for (6S)-NADPHX.

The protein in the N-terminal section; belongs to the NnrE/AIBP family. It in the C-terminal section; belongs to the NnrD/CARKD family. Requires K(+) as cofactor.

It carries out the reaction (6S)-NADHX + ADP = AMP + phosphate + NADH + H(+). It catalyses the reaction (6S)-NADPHX + ADP = AMP + phosphate + NADPH + H(+). The enzyme catalyses (6R)-NADHX = (6S)-NADHX. The catalysed reaction is (6R)-NADPHX = (6S)-NADPHX. Functionally, bifunctional enzyme that catalyzes the epimerization of the S- and R-forms of NAD(P)HX and the dehydration of the S-form of NAD(P)HX at the expense of ADP, which is converted to AMP. This allows the repair of both epimers of NAD(P)HX, a damaged form of NAD(P)H that is a result of enzymatic or heat-dependent hydration. The polypeptide is Bifunctional NAD(P)H-hydrate repair enzyme Nnr (nnr) (Thermosynechococcus vestitus (strain NIES-2133 / IAM M-273 / BP-1)).